Here is a 930-residue protein sequence, read N- to C-terminus: Polypeptide N-acetylgalactosaminyltransferase 5 (930 aa).

The Cytoplasmic segment spans residues 1-12 (MNKIRKFFRGSG). The helical; Signal-anchor for type II membrane protein transmembrane segment at 13 to 35 (RVLAFIFAASVIWLLFDMAALRL) threads the bilayer. Residues 36–930 (SFSEINAGLL…KWKFEKYYEV (895 aa)) are Lumenal-facing. The segment at 190–209 (KQEAPQNYNVSSDTSKQASE) is disordered. Residues 193–209 (APQNYNVSSDTSKQASE) show a composition bias toward polar residues. Residues N198, N213, and N283 are each glycosylated (N-linked (GlcNAc...) asparagine). Position 285 is a phosphoserine (S285). 4 N-linked (GlcNAc...) asparagine glycosylation sites follow: N287, N309, N355, and N387. The segment at 327–381 (DTKEVPNSKTQTVFPKLLGGSPHKQIPRNQSKTSSSPPALKKAVSQSKPTISGGL) is disordered. Residues 353–363 (PRNQSKTSSSP) show a composition bias toward polar residues. 3 cysteine pairs are disulfide-bonded: C476–C708, C699–C779, and C812–C825. A catalytic subdomain A region spans residues 485 to 594 (LPTTSIIMCF…VGWLEPLLER (110 aa)). Substrate is bound by residues D526 and R555. An N-linked (GlcNAc...) asparagine glycan is attached at N568. D578 contacts Mn(2+). S579 lines the substrate pocket. H580 contributes to the Mn(2+) binding site. Residues 654 to 716 (IIRCPVMAGG…PCSRVGHIFR (63 aa)) are catalytic subdomain B. Residue W685 coordinates substrate. H713 is a binding site for Mn(2+). Substrate contacts are provided by R716 and Y721. N-linked (GlcNAc...) asparagine glycosylation is found at N766, N817, and N835. The Ricin B-type lectin domain maps to 794-925 (KAPVVRASGV…MELQQKWKFE (132 aa)). Intrachain disulfides connect C848–C863 and C898–C913. N902 carries an N-linked (GlcNAc...) asparagine glycan.

This sequence belongs to the glycosyltransferase 2 family. GalNAc-T subfamily. As to quaternary structure, interacts with EXT2. Does not interact with EXT1, EXTL1 or EXTL3. Requires Mn(2+) as cofactor. As to expression, expressed at low level. Not expressed before E7.5 during embryogenesis. Expressed in dental mesenchyme and tongue. Accumulates in a subset of mesenchymal cells at the ventral-most portions of the 12.5 dpc maxilla and mandible underlying the dental lamina.

Its subcellular location is the golgi apparatus membrane. It catalyses the reaction L-seryl-[protein] + UDP-N-acetyl-alpha-D-galactosamine = a 3-O-[N-acetyl-alpha-D-galactosaminyl]-L-seryl-[protein] + UDP + H(+). It carries out the reaction L-threonyl-[protein] + UDP-N-acetyl-alpha-D-galactosamine = a 3-O-[N-acetyl-alpha-D-galactosaminyl]-L-threonyl-[protein] + UDP + H(+). It functions in the pathway protein modification; protein glycosylation. Catalyzes the initial reaction in O-linked oligosaccharide biosynthesis, the transfer of an N-acetyl-D-galactosamine residue to a serine or threonine residue on the protein receptor. Has activity toward EA2 peptide substrate, but has a weak activity toward Muc2 or Muc1b substrates. The polypeptide is Polypeptide N-acetylgalactosaminyltransferase 5 (Galnt5) (Mus musculus (Mouse)).